The following is a 162-amino-acid chain: Caveolin-2 (162 aa).

At 1-86 the chain is on the cytoplasmic side; it reads MGLETEKADV…FEISKYVLYK (86 aa). Tyr-19 bears the Phosphotyrosine; by SRC mark. Residues Ser-20 and Ser-23 each carry the phosphoserine modification. Phosphotyrosine; by SRC is present on Tyr-27. Ser-36 carries the phosphoserine modification. Positions 87 to 107 form an intramembrane region, helical; it reads FLTVFLAIPLAFVAGILFATL. The Cytoplasmic portion of the chain corresponds to 108–162; the sequence is SCLHIWIIMPFVKTCLMVLPSVQTIWKSVTDVIIAPLCTSVGRSFSSISLRLSQD.

This sequence belongs to the caveolin family. As to quaternary structure, monomer or homodimer. Interacts with CAV1; the interaction forms a stable heterooligomeric complex that is required for targeting to lipid rafts and for caveolae formation. Tyrosine phosphorylated forms do not form heterooligomers with the Tyr-19-phosphorylated form existing as a monomer or dimer, and the Tyr-27-form as a monomer only. Interacts (tyrosine phosphorylated form) with the SH2 domain-containing proteins, RASA1, NCK1 and SRC. Interacts (tyrosine phosphorylated form) with INSR, the interaction (Tyr-27-phosphorylated form) is increased on insulin stimulation. Interacts (Tyr-19 phosphorylated form) with MAPK1 (phosphorylated form); the interaction, promoted by insulin, leads to nuclear location and MAPK1 activation. Interacts with STAT3; the interaction is increased on insulin-induced tyrosine phosphorylation leading to STAT activation. In terms of processing, phosphorylated on serine and tyrosine residues. CAV1 promotes phosphorylation on Ser-23 which then targets the complex to the plasma membrane, lipid rafts and caveolae. Phosphorylation on Ser-36 appears to modulate mitosis in endothelial cells. Phosphorylation on both Tyr-19 and Tyr-27 is required for insulin-induced 'Ser-727' phosphorylation of STAT3 and its activation. Phosphorylation on Tyr-19 is required for insulin-induced phosphorylation of MAPK1 and DNA binding of STAT3. Tyrosine phosphorylation is induced by both EGF and insulin (By. similarity).

The protein localises to the nucleus. Its subcellular location is the cytoplasm. The protein resides in the golgi apparatus membrane. It is found in the cell membrane. It localises to the membrane. The protein localises to the caveola. Its function is as follows. May act as a scaffolding protein within caveolar membranes. Interacts directly with G-protein alpha subunits and can functionally regulate their activity. Acts as an accessory protein in conjunction with CAV1 in targeting to lipid rafts and driving caveolae formation. The Ser-36 phosphorylated form has a role in modulating mitosis in endothelial cells. Positive regulator of cellular mitogenesis of the MAPK signaling pathway. Required for the insulin-stimulated nuclear translocation and activation of MAPK1 and STAT3, and the subsequent regulation of cell cycle progression. The sequence is that of Caveolin-2 (CAV2) from Otolemur garnettii (Small-eared galago).